The sequence spans 187 residues: Protein GrpE (187 aa).

Positions 1–25 are disordered; it reads MADEQNLDNRAPEETPAAEGTSAGE.

Belongs to the GrpE family. As to quaternary structure, homodimer.

It localises to the cytoplasm. Participates actively in the response to hyperosmotic and heat shock by preventing the aggregation of stress-denatured proteins, in association with DnaK and GrpE. It is the nucleotide exchange factor for DnaK and may function as a thermosensor. Unfolded proteins bind initially to DnaJ; upon interaction with the DnaJ-bound protein, DnaK hydrolyzes its bound ATP, resulting in the formation of a stable complex. GrpE releases ADP from DnaK; ATP binding to DnaK triggers the release of the substrate protein, thus completing the reaction cycle. Several rounds of ATP-dependent interactions between DnaJ, DnaK and GrpE are required for fully efficient folding. The polypeptide is Protein GrpE (Azotobacter vinelandii (strain DJ / ATCC BAA-1303)).